The chain runs to 551 residues: Arginine--tRNA ligase (551 aa).

Residues 123-133 (ANPTGPLTIGR) carry the 'HIGH' region motif.

This sequence belongs to the class-I aminoacyl-tRNA synthetase family. As to quaternary structure, monomer.

It localises to the cytoplasm. It carries out the reaction tRNA(Arg) + L-arginine + ATP = L-arginyl-tRNA(Arg) + AMP + diphosphate. This Chlorobium limicola (strain DSM 245 / NBRC 103803 / 6330) protein is Arginine--tRNA ligase.